The following is a 1799-amino-acid chain: Putative neural-cadherin 2 (1799 aa).

N-linked (GlcNAc...) asparagine glycans are attached at residues Asn-13, Asn-64, Asn-86, Asn-118, Asn-195, Asn-260, Asn-264, Asn-283, and Asn-377. 7 Cadherin domains span residues 37 to 136 (DRFL…PPVF), 137 to 252 (DRQT…APQF), 253 to 364 (PQGI…PPQF), 368 to 485 (EWVT…VPKF), 486 to 590 (DREH…APTF), 590 to 709 (FAQD…QPGS), and 708 to 812 (GSKS…AGSM). Residues Asn-601, Asn-793, Asn-910, Asn-948, and Asn-969 are each glycosylated (N-linked (GlcNAc...) asparagine). The region spanning 973 to 1010 (QDHNCRTHLCYNGGRCVETRNGPKCVACPVGYNGPRCQ) is the EGF-like 1 domain. 7 disulfide bridges follow: Cys-977–Cys-988, Cys-982–Cys-997, Cys-1000–Cys-1009, Cys-1191–Cys-1217, Cys-1224–Cys-1239, Cys-1233–Cys-1248, and Cys-1250–Cys-1259. A Laminin G-like 1 domain is found at 1011 to 1217 (QSTRSFRGNG…ALARNSFPAC (207 aa)). The 41-residue stretch at 1220–1260 (TDEVCLKTEHTARCWEHGNCVASLVQAKCHCQPGWMGPGCN) folds into the EGF-like 2 domain. The 192-residue stretch at 1263-1454 (TIPTTFKAQS…TMARNLERNC (192 aa)) folds into the Laminin G-like 2 domain. 2 N-linked (GlcNAc...) asparagine glycosylation sites follow: Asn-1376 and Asn-1437. Intrachain disulfides connect Cys-1419–Cys-1454, Cys-1501–Cys-1512, Cys-1506–Cys-1523, and Cys-1525–Cys-1534. In terms of domain architecture, EGF-like 3; calcium-binding spans 1497 to 1535 (DRNECLDLPCLNGATCINLEPRLRYRCICPEGYWGENCE). Residues 1549-1569 (ALGAIFVCLIIILILALIFVL) traverse the membrane as a helical segment. Residues 1726–1799 (ASSQLPSDGG…PLPEVDKVVL (74 aa)) are disordered. 3 stretches are compositionally biased toward gly residues: residues 1733–1744 (DGGGGSGDGPGP), 1752–1763 (LGGGGTGGGSGI), and 1775–1786 (SGAGPGGGGGSS).

It is found in the cell membrane. In terms of biological role, cadherins are calcium-dependent cell adhesion proteins. They preferentially interact with themselves in a homophilic manner in connecting cells. This is Putative neural-cadherin 2 (CadN2) from Drosophila melanogaster (Fruit fly).